An 866-amino-acid polypeptide reads, in one-letter code: FHIP family protein v1g243165 (866 aa).

2 disordered regions span residues 739–761 and 781–814; these read RDGPPPSLMRAHSIGSIGSASTS and GSTADISEDASPVSQAPETTGRPRASAVVRESQT. Positions 751–761 are enriched in low complexity; the sequence is SIGSIGSASTS.

The protein belongs to the FHIP family.

The chain is FHIP family protein v1g243165 from Nematostella vectensis (Starlet sea anemone).